The sequence spans 397 residues: Acetate kinase (397 aa).

A Mg(2+)-binding site is contributed by Asn-8. Residue Lys-15 participates in ATP binding. Arg-92 contacts substrate. Catalysis depends on Asp-149, which acts as the Proton donor/acceptor. ATP is bound by residues 209 to 213, 283 to 285, and 331 to 335; these read HLGNG, DFR, and GVGEN. Position 385 (Glu-385) interacts with Mg(2+).

The protein belongs to the acetokinase family. Homodimer. It depends on Mg(2+) as a cofactor. Requires Mn(2+) as cofactor.

The protein localises to the cytoplasm. The catalysed reaction is acetate + ATP = acetyl phosphate + ADP. The protein operates within metabolic intermediate biosynthesis; acetyl-CoA biosynthesis; acetyl-CoA from acetate: step 1/2. Functionally, catalyzes the formation of acetyl phosphate from acetate and ATP. Can also catalyze the reverse reaction. This chain is Acetate kinase, found in Corynebacterium glutamicum (strain ATCC 13032 / DSM 20300 / JCM 1318 / BCRC 11384 / CCUG 27702 / LMG 3730 / NBRC 12168 / NCIMB 10025 / NRRL B-2784 / 534).